The following is a 207-amino-acid chain: Protein YABBY 6 (207 aa).

The C4-type zinc-finger motif lies at 16–43 (CNFCNTILAVSVPGNSMLNIVTVRCGHC).

The protein belongs to the YABBY family. In terms of tissue distribution, expressed in leaf blades, leaf sheaths and flowers.

It localises to the nucleus. The polypeptide is Protein YABBY 6 (YAB6) (Oryza sativa subsp. japonica (Rice)).